A 488-amino-acid polypeptide reads, in one-letter code: Ribulose bisphosphate carboxylase large chain 1 (488 aa).

Substrate contacts are provided by N127 and T177. K179 (proton acceptor) is an active-site residue. K181 contacts substrate. The Mg(2+) site is built by K205, D207, and E208. The residue at position 205 (K205) is an N6-carboxylysine. The active-site Proton acceptor is the H297. Residues R298, H330, and S382 each contribute to the substrate site.

It belongs to the RuBisCO large chain family. Type I subfamily. In terms of assembly, heterohexadecamer of 8 large chains and 8 small chains. Mg(2+) serves as cofactor.

The catalysed reaction is 2 (2R)-3-phosphoglycerate + 2 H(+) = D-ribulose 1,5-bisphosphate + CO2 + H2O. It catalyses the reaction D-ribulose 1,5-bisphosphate + O2 = 2-phosphoglycolate + (2R)-3-phosphoglycerate + 2 H(+). Functionally, ruBisCO catalyzes two reactions: the carboxylation of D-ribulose 1,5-bisphosphate, the primary event in carbon dioxide fixation, as well as the oxidative fragmentation of the pentose substrate. Both reactions occur simultaneously and in competition at the same active site. The sequence is that of Ribulose bisphosphate carboxylase large chain 1 from Bradyrhizobium sp. (strain BTAi1 / ATCC BAA-1182).